We begin with the raw amino-acid sequence, 194 residues long: Peptidyl-tRNA hydrolase (194 aa).

Tyr-17 provides a ligand contact to tRNA. The active-site Proton acceptor is His-22. 3 residues coordinate tRNA: Phe-68, Asn-70, and Asn-116.

It belongs to the PTH family. Monomer.

It localises to the cytoplasm. The catalysed reaction is an N-acyl-L-alpha-aminoacyl-tRNA + H2O = an N-acyl-L-amino acid + a tRNA + H(+). In terms of biological role, hydrolyzes ribosome-free peptidyl-tRNAs (with 1 or more amino acids incorporated), which drop off the ribosome during protein synthesis, or as a result of ribosome stalling. Catalyzes the release of premature peptidyl moieties from peptidyl-tRNA molecules trapped in stalled 50S ribosomal subunits, and thus maintains levels of free tRNAs and 50S ribosomes. The chain is Peptidyl-tRNA hydrolase from Shewanella woodyi (strain ATCC 51908 / MS32).